Consider the following 627-residue polypeptide: Probable inactive L-type lectin-domain containing receptor kinase III.1 (627 aa).

The signal sequence occupies residues 1 to 23 (MITFKSIALTIIFLSYFVSCVSS). Residues 24–303 (QRETKFLNHG…STEKKSNNTM (280 aa)) are Extracellular-facing. Residues 26–262 (ETKFLNHGFL…SHFVLGWSFN (237 aa)) form a legume-lectin like region. N-linked (GlcNAc...) asparagine glycans are attached at residues Asn57, Asn78, Asn127, Asn184, Asn202, Asn209, and Asn230. The tract at residues 272-297 (ITKLPSLPDPPPTLSPSPSPPVSTEK) is disordered. A compositionally biased stretch (pro residues) spans 278-292 (LPDPPPTLSPSPSPP). An N-linked (GlcNAc...) asparagine glycan is attached at Asn300. Residues 304–324 (LIIIVAASATVALMILIFSGF) traverse the membrane as a helical segment. Topologically, residues 325-627 (WFLRRDKIFF…PHDDYLFYGV (303 aa)) are cytoplasmic. A Protein kinase domain is found at 353-623 (FDNSKLLGER…TEALPHDDYL (271 aa)). ATP is bound by residues 359–367 (LGERNSGSF) and Lys381.

It in the C-terminal section; belongs to the protein kinase superfamily. Ser/Thr protein kinase family. In the N-terminal section; belongs to the leguminous lectin family.

It localises to the cell membrane. This Arabidopsis thaliana (Mouse-ear cress) protein is Probable inactive L-type lectin-domain containing receptor kinase III.1 (LECRK31).